The following is a 263-amino-acid chain: Norsolorinic acid ketoreductase stcE (263 aa).

7 residues coordinate NADP(+): Leu-29, Asp-76, Asn-105, Tyr-177, Lys-181, Ile-208, and Ser-210. Tyr-177 (proton donor) is an active-site residue. Catalysis depends on Lys-181, which acts as the Lowers pKa of active site Tyr.

It belongs to the short-chain dehydrogenases/reductases (SDR) family.

It carries out the reaction (1'S)-averantin + NADP(+) = norsolorinic acid + NADPH + H(+). Its pathway is mycotoxin biosynthesis; sterigmatocystin biosynthesis. Functionally, short chain dehydrogenase; part of the gene cluster that mediates the biosynthesis of sterigmatocystin (ST), a polyketide-derived furanocoumarin which is part of the most toxic and carcinogenic compounds among the known mycotoxins. The first step in the biosynthesis of sterigmatocystin is the production of hexanoate by the fatty acid synthase (FAS) units stcJ and stcK. The polyketide backbone is assembled by the non-reducing polyketide synthase stcA by condensation of the starter hexanoyl-CoA and 7 malonyl-CoA extender units followed by cyclization and release of norsolorinic acid. Norsolorinic acid is the first stable intermediate in the biosynthesis of sterigmatocystin and is converted into averantin (AVN) by the ketoreductase stcE which reduces the hexanoate ketone to an alcohol. Averantin is then oxidized into 5'-hydroxyaverantin (HAVN) by the cytochrome P450 monooxygenase stcF. 5'-hydroxyaverantin is further converted to 5'-oxyaverantin (OAVN) by the 5'-hydroxyaverantin dehydrogenase stcG. The next step is the conversion of OAVN into averufin (AVF) which is catalyzed by a yet to be identified enzyme. The cytochrome P450 monooxygenase stcB and the flavin-binding monooxygenase stcW are both required for the conversion of averufin to 1-hydroxyversicolorone. The esterase stcI probably catalyzes the formation of versiconal hemiacetal acetate from 1-hydroxyversicolorone. The oxydoreductase stcN then probably catalyzes the biosynthetic step from versiconal to versicolorin B (VERB). The next step is performed by the versicolorin B desaturase stcL to produce versicolorin A (VERA). The ketoreductase stcU and the cytochrome P450 monooxygenase stcS are involved in the conversion of versicolorin A to demethylsterigmatocystin. The Baeyer-Villiger oxidas stcQ and the reductase stcR might be involved in the biosynthetic step from versicolorin A to demethylsterigmatocystin. The final step in the biosynthesis of sterigmatocystin is the methylation of demethylsterigmatocystin catalyzed by the methyltransferase stcP. This chain is Norsolorinic acid ketoreductase stcE, found in Emericella nidulans (strain FGSC A4 / ATCC 38163 / CBS 112.46 / NRRL 194 / M139) (Aspergillus nidulans).